Here is a 600-residue protein sequence, read N- to C-terminus: Proline--tRNA ligase (600 aa).

Belongs to the class-II aminoacyl-tRNA synthetase family. ProS type 1 subfamily. As to quaternary structure, homodimer.

Its subcellular location is the cytoplasm. The catalysed reaction is tRNA(Pro) + L-proline + ATP = L-prolyl-tRNA(Pro) + AMP + diphosphate. Its function is as follows. Catalyzes the attachment of proline to tRNA(Pro) in a two-step reaction: proline is first activated by ATP to form Pro-AMP and then transferred to the acceptor end of tRNA(Pro). As ProRS can inadvertently accommodate and process non-cognate amino acids such as alanine and cysteine, to avoid such errors it has two additional distinct editing activities against alanine. One activity is designated as 'pretransfer' editing and involves the tRNA(Pro)-independent hydrolysis of activated Ala-AMP. The other activity is designated 'posttransfer' editing and involves deacylation of mischarged Ala-tRNA(Pro). The misacylated Cys-tRNA(Pro) is not edited by ProRS. This is Proline--tRNA ligase from Synechococcus elongatus (strain ATCC 33912 / PCC 7942 / FACHB-805) (Anacystis nidulans R2).